The following is a 96-amino-acid chain: Large ribosomal subunit protein bL21 (96 aa).

It belongs to the bacterial ribosomal protein bL21 family. Part of the 50S ribosomal subunit. Contacts protein L20.

Its function is as follows. This protein binds to 23S rRNA in the presence of protein L20. The sequence is that of Large ribosomal subunit protein bL21 from Chlorobium phaeobacteroides (strain BS1).